The following is a 72-amino-acid chain: U-actitoxin-Aeq5b (72 aa).

Positions 1–20 (MNQVMTIFLVLGVIVYSVES) are cleaved as a signal peptide. Cystine bridges form between Cys-33–Cys-71, Cys-37–Cys-66, Cys-44–Cys-59, and Cys-50–Cys-56.

This sequence belongs to the Acrorhagin I family. Expressed by acrorhagi.

It localises to the secreted. It is found in the nematocyst. Toxin that is lethal to crab. It interacts with divalent metal ions (zinc and nickel) suggesting it may function as a metal ion chelator to regulate metal ion levels or as a metal ion transporter, or that its function is modulated by metal ions. Is not active against any of the voltage-gated potassium and sodium channels tested. In addition, it does not show activity in bacterial and fungal growth inhibitory assays as well as in hemolytic assays. This Actinia equina (Beadlet anemone) protein is U-actitoxin-Aeq5b.